The primary structure comprises 936 residues: MTMATTDVFIISSSPPRQSVSYNVSSPPLPSLDEMIKQKKAPNLRRGGGAASTPLDPTATFTSASALLRRGSSGSLQEFDTARSLATTTKPDENEQKKTAKPKAPRKPAAKKEDGPIEKVAKVPRKTTRNKGEDRAEGFIEGVVEEGKEGVKTIPEKKPRKSRAKKTDNLGGDGEDGGITGAVVPDVSKVAVETKACKPRAKKGDDITGEGVKERAPRKPRAKKTDVEAGSESVAKEKAVRKPRAKKSDGGTTVQPKMAKGRVTKTTNASNPDKVETPKADKVSKHFASNPVVEDLLAEEGSGLSEAVKRRKNWTPPKSNQVLIDYDDSPEAGSSGCNQGFTELLGSFGFSSSEANSIEKRISSGVSSGAAVTRKRKLIEMVHTNIPTTAGTKATKEKAVKKKARTLTDLATSAYTATEDDDTINDTPAPLLQHFPKAASGELTNDGFKKPPKLRSKSPVKGLPKSKKGSAEEPILLSPESALKQVGNQDFVFGTSSQLAREDSPSLLRDLHDAMQASNELDDYDDPFISPPTKIAERAKAVIAAKRNLWSIAARDDHGDLIDIETVDLAHTPVAKPDRIILSQKPSSLWITPAKDEWYDIDEIEENRPPSTQVPVRQMGPIEMAINLELSNSPLQPKNSSKDVSTSSPRKKHTKASIIETTPKKTTTAKMPDYESFTTPQLSREIQKYKFKQIKSRKKMIDLLVQCFESQNRPALGVLQGNIPITSQGSSEVSKVIAGSSTQLEPTISSSQRGRGRPTKDTAASKSKAKSKIKDSVAILETDSNAPLSEFRTPKKSKKGKQVIEDVPDSDHPMTPSPPRRSASQIRKASKALELSPIKNDHDDEAQQAQLFTHIYTAITSAPPSQDLSNPSWHEKILLYDPVVLEDLASWLNTGALGKVGWDGEVAPKELKKWCESKSICCLWKENQGGGARSRY.

6 disordered regions span residues 1 to 182, 195 to 291, 303 to 338, 437 to 472, 631 to 671, and 734 to 829; these read MTMA…ITGA, KACK…ASNP, GLSEAVKRRKNWTPPKSNQVLIDYDDSPEAGSSGCN, KAASGELTNDGFKKPPKLRSKSPVKGLPKSKKGSAE, SNSP…TAKM, and SKVI…IRKA. Positions 11–26 are enriched in polar residues; sequence ISSSPPRQSVSYNVSS. A compositionally biased stretch (low complexity) spans 63–76; it reads SASALLRRGSSGSL. The span at 99–109 shows a compositional bias: basic residues; it reads TAKPKAPRKPA. 4 stretches are compositionally biased toward basic and acidic residues: residues 110 to 121, 145 to 157, 202 to 227, and 273 to 284; these read AKKEDGPIEKVA, EEGKEGVKTIPEK, KKGDDITGEGVKERAPRKPRAKKTDV, and DKVETPKADKVS. Residues 450 to 468 show a composition bias toward basic residues; that stretch reads KPPKLRSKSPVKGLPKSKK. 2 stretches are compositionally biased toward polar residues: residues 631-648 and 734-753; these read SNSPLQPKNSSKDVSTSS and SKVIAGSSTQLEPTISSSQR.

It belongs to the SLX4 family. In terms of assembly, forms a heterodimer with slx1. Phosphorylated in response to DNA damage.

The protein resides in the nucleus. Functionally, regulatory subunit of the slx1-slx4 structure-specific endonuclease that resolves DNA secondary structures generated during DNA repair and recombination. Has endonuclease activity towards branched DNA substrates, introducing single-strand cuts in duplex DNA close to junctions with ss-DNA. The sequence is that of Structure-specific endonuclease subunit slx4 (slx4) from Botryotinia fuckeliana (strain B05.10) (Noble rot fungus).